A 300-amino-acid polypeptide reads, in one-letter code: Jacalin-related lectin 32 (300 aa).

Position 2 is an N-acetylalanine (Ala2). 2 consecutive Jacalin-type lectin domains span residues 2–146 (AQKV…YFTT) and 154–297 (AKKL…HILP).

Belongs to the jacalin lectin family.

In terms of biological role, involved in gametophytic development. This chain is Jacalin-related lectin 32 (JAL32), found in Arabidopsis thaliana (Mouse-ear cress).